The chain runs to 193 residues: Potassium-transporting ATPase KdpC subunit (193 aa).

Residues 14–34 (ITFTFLVLCGLVYPLIVTGIA) form a helical membrane-spanning segment.

This sequence belongs to the KdpC family. The system is composed of three essential subunits: KdpA, KdpB and KdpC.

The protein resides in the cell membrane. Its function is as follows. Part of the high-affinity ATP-driven potassium transport (or Kdp) system, which catalyzes the hydrolysis of ATP coupled with the electrogenic transport of potassium into the cytoplasm. This subunit acts as a catalytic chaperone that increases the ATP-binding affinity of the ATP-hydrolyzing subunit KdpB by the formation of a transient KdpB/KdpC/ATP ternary complex. The polypeptide is Potassium-transporting ATPase KdpC subunit (Bacillus cereus (strain ATCC 10987 / NRS 248)).